The chain runs to 444 residues: 23S rRNA (uracil(1939)-C(5))-methyltransferase RlmD (444 aa).

The 60-residue stretch at 5–64 folds into the TRAM domain; the sequence is KPKLNLTSQTARIVNLSHDGRGIARINGKATFIQGALPGEVVEFQYTRVKKDFDEGKLLS. [4Fe-4S] cluster contacts are provided by Cys-77, Cys-83, Cys-86, and Cys-166. S-adenosyl-L-methionine contacts are provided by Gln-276, Phe-305, Asn-310, Glu-326, Asn-353, and Asp-374. Cys-400 serves as the catalytic Nucleophile.

Belongs to the class I-like SAM-binding methyltransferase superfamily. RNA M5U methyltransferase family. RlmD subfamily.

The enzyme catalyses uridine(1939) in 23S rRNA + S-adenosyl-L-methionine = 5-methyluridine(1939) in 23S rRNA + S-adenosyl-L-homocysteine + H(+). Functionally, catalyzes the formation of 5-methyl-uridine at position 1939 (m5U1939) in 23S rRNA. This Legionella pneumophila (strain Lens) protein is 23S rRNA (uracil(1939)-C(5))-methyltransferase RlmD.